A 552-amino-acid chain; its full sequence is Urocanate hydratase (552 aa).

NAD(+) contacts are provided by residues 49 to 50, Gln127, 173 to 175, Asp193, 239 to 240, 260 to 264, 270 to 271, and Tyr319; these read GG, GMG, NA, QTSAH, and YI. Cys407 is an active-site residue. Gly489 is an NAD(+) binding site.

It belongs to the urocanase family. Requires NAD(+) as cofactor.

The protein resides in the cytoplasm. The enzyme catalyses 4-imidazolone-5-propanoate = trans-urocanate + H2O. It functions in the pathway amino-acid degradation; L-histidine degradation into L-glutamate; N-formimidoyl-L-glutamate from L-histidine: step 2/3. Catalyzes the conversion of urocanate to 4-imidazolone-5-propionate. This chain is Urocanate hydratase, found in Bacillus anthracis (strain CDC 684 / NRRL 3495).